Here is a 674-residue protein sequence, read N- to C-terminus: ATP-dependent DNA helicase Rep (674 aa).

Positions 1–280 constitute a UvrD-like helicase ATP-binding domain; sequence MRLNPGQQHA…IKLEQNYRSS (280 aa). ATP is bound by residues 22–29 and Arg278; that span reads AGAGSGKT. One can recognise a UvrD-like helicase C-terminal domain in the interval 281–562; that stretch reads GRILKAANIL…QLMTLHASKG (282 aa).

Belongs to the helicase family. UvrD subfamily. As to quaternary structure, homodimer.

It catalyses the reaction Couples ATP hydrolysis with the unwinding of duplex DNA by translocating in the 3'-5' direction.. The enzyme catalyses ATP + H2O = ADP + phosphate + H(+). Its function is as follows. Rep helicase is a single-stranded DNA-dependent ATPase involved in DNA replication; it can initiate unwinding at a nick in the DNA. It binds to the single-stranded DNA and acts in a progressive fashion along the DNA in the 3' to 5' direction. This Salmonella typhimurium (strain LT2 / SGSC1412 / ATCC 700720) protein is ATP-dependent DNA helicase Rep.